We begin with the raw amino-acid sequence, 470 residues long: mRNA export factor ICP27 homolog (470 aa).

2 disordered regions span residues 1–31 (MALS…TGGD) and 62–204 (VGDP…DRLN). Positions 71-85 (VSFSASPQRAQPSNP) are enriched in polar residues. 2 stretches are compositionally biased toward basic residues: residues 94–107 (HGRR…RRNN) and 178–187 (RVHRNRRRGN). The Zn(2+) site is built by Cys-359, His-437, Cys-441, and Cys-446. The CHC2-type zinc finger occupies 359–446 (CYLSSSGSPT…HKRRCKADTC (88 aa)).

Belongs to the HHV-1 ICP27 protein family. Homodimer. Homodimerization is required for transactivation. Associates in a complex with RNA, and host export factors NXF1/TAP and ALYREF; these interactions allow nuclear export of viral transcripts. Interacts with three host shuttling SR proteins SRSF1, SRSF3 and SRSF7. Interacts with host SRPK1. Interacts with IE62; this interaction enhances IE62 transactivation.

It is found in the host cytoplasm. Its subcellular location is the host nucleus. Multifunctional regulator of the expression of viral genes that mediates nuclear export of viral intronless mRNAs. This immediate early (EI) protein promotes the nuclear export of viral intronless mRNAs by interacting with mRNAs and host NXF1/TAP. In Equine herpesvirus 1 (strain Ab4p) (EHV-1), this protein is mRNA export factor ICP27 homolog.